Consider the following 4870-residue polypeptide: Malformin synthetase mlfA (4870 aa).

The segment at 106–497 is adenylation 1; the sequence is ERRAANRPHS…CGRADTQVKL (392 aa). A Carrier 1 domain is found at 635–711; the sequence is LGLSQLEQEI…EASSLAEVQE (77 aa). Position 672 is an O-(pantetheine 4'-phosphoryl)serine (S672). The segment at 749–1133 is condensation 1; sequence EDVFPCTTMQ…ALNTLTLLQA (385 aa). The adenylation 2 stretch occupies residues 1161–1550; that stretch reads DRWVTRQPES…GRKDTQVKLR (390 aa). The Carrier 2 domain occupies 1688–1765; the sequence is TASSKLELTL…QLAAILGEAT (78 aa). S1725 carries the O-(pantetheine 4'-phosphoryl)serine modification. Disordered stretches follow at residues 1764–1794 and 1829–1859; these read ATGQPESSASSTTEEGFTFSTPDDSSTNDGV and GSSSCKTPSVSSSSSSSSSRKKKSAKVVSPV. Low complexity-rich tracts occupy residues 1769 to 1792 and 1830 to 1846; these read ESSASSTTEEGFTFSTPDDSSTND and SSSCKTPSVSSSSSSSS. Residues 1898-2313 form a condensation 2 region; sequence EDIYPATALQ…GVSYRDKQTL (416 aa). The tract at residues 2336–2728 is adenylation 3; that stretch reads VRTPHAPAVF…IGRRDGQLKL (393 aa). The Carrier 3 domain occupies 2864–2940; sequence RPATAQEREM…QLMRHLSANG (77 aa). S2901 carries the post-translational modification O-(pantetheine 4'-phosphoryl)serine. 2 condensation regions span residues 2957–3422 and 3443–3862; these read WVPL…TYDQ and DIYP…EQLV. Positions 3887–4277 are adenylation 4; sequence HSSREAACAW…VGRKDNQIKF (391 aa). The Carrier 4 domain occupies 4411–4487; it reads MPFTAAECKM…DLAYRTANLV (77 aa). At S4448 the chain carries O-(pantetheine 4'-phosphoryl)serine. The interval 4524-4837 is condensation 5; the sequence is EVLPTTSFQR…LQTIVQHQNN (314 aa).

Belongs to the NRP synthetase family.

The protein operates within secondary metabolite biosynthesis. Its function is as follows. Nonribosomal peptide synthetase; part of the gene cluster that mediates the biosynthesis of malformins, cyclic pentapeptides with a disulfide bond between 2 consecutive cysteins, that show potential anti-tumor as well as antimalarial and antitrypanosomal properties. The nonribosomal peptide synthetase mlfA is responsible of the formation of the cyclic pentapeptide. The malformin biosynthesis clusters in malformin-producing fungi also contain enzymes involved in the formation of the disulfide bond between the two consecutive cysteins within malformins, in addition to additional tailoring enzymes such as methyltransferases or oxidoreductases. They are also composed of up to 4 major facilitator superfamily transporters, and transcription factors probably involved in the regulation of the expression of those clusters. This Aspergillus niger (strain ATCC 1015 / CBS 113.46 / FGSC A1144 / LSHB Ac4 / NCTC 3858a / NRRL 328 / USDA 3528.7) protein is Malformin synthetase mlfA.